Reading from the N-terminus, the 136-residue chain is Transcription antitermination protein NusB (136 aa).

Belongs to the NusB family.

In terms of biological role, involved in transcription antitermination. Required for transcription of ribosomal RNA (rRNA) genes. Binds specifically to the boxA antiterminator sequence of the ribosomal RNA (rrn) operons. This is Transcription antitermination protein NusB from Pseudoalteromonas translucida (strain TAC 125).